The primary structure comprises 260 residues: Thiazole synthase (260 aa).

Lysine 102 acts as the Schiff-base intermediate with DXP in catalysis. Residues glycine 163, 189–190 (AG), and 211–212 (NT) contribute to the 1-deoxy-D-xylulose 5-phosphate site.

The protein belongs to the ThiG family. Homotetramer. Forms heterodimers with either ThiH or ThiS.

Its subcellular location is the cytoplasm. It carries out the reaction [ThiS sulfur-carrier protein]-C-terminal-Gly-aminoethanethioate + 2-iminoacetate + 1-deoxy-D-xylulose 5-phosphate = [ThiS sulfur-carrier protein]-C-terminal Gly-Gly + 2-[(2R,5Z)-2-carboxy-4-methylthiazol-5(2H)-ylidene]ethyl phosphate + 2 H2O + H(+). The protein operates within cofactor biosynthesis; thiamine diphosphate biosynthesis. Catalyzes the rearrangement of 1-deoxy-D-xylulose 5-phosphate (DXP) to produce the thiazole phosphate moiety of thiamine. Sulfur is provided by the thiocarboxylate moiety of the carrier protein ThiS. In vitro, sulfur can be provided by H(2)S. The polypeptide is Thiazole synthase (Citrifermentans bemidjiense (strain ATCC BAA-1014 / DSM 16622 / JCM 12645 / Bem) (Geobacter bemidjiensis)).